Reading from the N-terminus, the 551-residue chain is Protein GZF3 (551 aa).

Positions 17 to 43 (DNVFEPKSSENLNSLNQSEEEGHIGRW) are disordered. The GATA-type zinc-finger motif lies at 131 to 155 (CKNCLTSTTPLWRRDEHGAMLCNAC). Disordered stretches follow at residues 212 to 260 (GRKA…SATK), 379 to 400 (LAPT…QIRS), and 467 to 490 (SISN…AKDL). Over residues 228–239 (SQLLMGTSSTAK) the composition is skewed to polar residues. The span at 244–254 (PKTESKERSDS) shows a compositional bias: basic and acidic residues. Residues 388–400 (DSNPSEVPNQIRS) show a composition bias toward polar residues. Residues 467–477 (SISNSVSSSDV) are compositionally biased toward low complexity. Over residues 478 to 490 (SGRKFENHPAKDL) the composition is skewed to basic and acidic residues.

The protein resides in the nucleus. This is Protein GZF3 (GZF3) from Saccharomyces cerevisiae (strain ATCC 204508 / S288c) (Baker's yeast).